The primary structure comprises 717 residues: P-loop NTPase domain-containing protein LPA1 homolog 2 (717 aa).

2 disordered regions span residues 235–259 and 532–629; these read KKLKGSRGVNSNAQKTDAGSNSSTT and HYSS…DTIS. Polar residues-rich tracts occupy residues 243 to 259 and 532 to 545; these read VNSNAQKTDAGSNSSTT and HYSSCCSSPRTSDG. Positions 559–582 are enriched in acidic residues; sequence SDEDDEEGDDDFHEPDSDEDLSDN. The span at 583–602 shows a compositional bias: basic and acidic residues; that stretch reads NDERNRDEIGSVDEESTKSD.

Its function is as follows. May be not required for the accumulation of phytic acid in seeds. Phytic acid is the primary storage form of phosphorus in cereal grains and other plant seeds. The protein is P-loop NTPase domain-containing protein LPA1 homolog 2 of Arabidopsis thaliana (Mouse-ear cress).